The chain runs to 620 residues: Acetylcholinesterase 1 (620 aa).

An N-terminal signal peptide occupies residues 1-31; that stretch reads MRNSLLFFIFLPSTILAVDLIHLHDGSPLFG. Residue Asn74 is glycosylated (N-linked (GlcNAc...) asparagine). A disulfide bond links Cys82 and Cys109. The active-site Acyl-ester intermediate is the Ser216. An intrachain disulfide couples Cys270 to Cys286. N-linked (GlcNAc...) asparagine glycosylation is present at Asn272. Residues Glu346 and His468 each act as charge relay system in the active site. The cysteines at positions 430 and 558 are disulfide-linked. N-linked (GlcNAc...) asparagine glycans are attached at residues Asn486 and Asn536.

This sequence belongs to the type-B carboxylesterase/lipase family. As to quaternary structure, oligomer composed of disulfide-linked homodimers.

The protein localises to the synapse. The protein resides in the secreted. It localises to the cell membrane. It carries out the reaction acetylcholine + H2O = choline + acetate + H(+). Its function is as follows. Rapidly hydrolyzes acetylcholine and releases choline into the synapse. It can hydrolyze propionylcholine and butyrylthiocholine in vitro. The polypeptide is Acetylcholinesterase 1 (ace-1) (Caenorhabditis elegans).